The sequence spans 819 residues: Probable phosphoenolpyruvate synthase (819 aa).

The active-site Tele-phosphohistidine intermediate is histidine 441. Residues arginine 540, arginine 587, glutamate 684, glycine 706, threonine 707, asparagine 708, and aspartate 709 each coordinate substrate. Mg(2+) is bound at residue glutamate 684. A Mg(2+)-binding site is contributed by aspartate 709. Cysteine 756 (proton donor) is an active-site residue.

This sequence belongs to the PEP-utilizing enzyme family. It depends on Mg(2+) as a cofactor.

The catalysed reaction is pyruvate + ATP + H2O = phosphoenolpyruvate + AMP + phosphate + 2 H(+). Its pathway is carbohydrate biosynthesis; gluconeogenesis. Its function is as follows. Catalyzes the phosphorylation of pyruvate to phosphoenolpyruvate. This Pyrococcus abyssi (strain GE5 / Orsay) protein is Probable phosphoenolpyruvate synthase (ppsA).